We begin with the raw amino-acid sequence, 338 residues long: Glycerol-3-phosphate dehydrogenase [NAD(P)+] (338 aa).

Residues Ser13, Trp14, and Lys108 each contribute to the NADPH site. Positions 108, 139, and 141 each coordinate sn-glycerol 3-phosphate. Ala143 provides a ligand contact to NADPH. Residues Lys194, Asp247, Ser257, Arg258, and Asn259 each contribute to the sn-glycerol 3-phosphate site. Lys194 functions as the Proton acceptor in the catalytic mechanism. Arg258 is a binding site for NADPH. Positions 282 and 284 each coordinate NADPH.

This sequence belongs to the NAD-dependent glycerol-3-phosphate dehydrogenase family.

It localises to the cytoplasm. It catalyses the reaction sn-glycerol 3-phosphate + NAD(+) = dihydroxyacetone phosphate + NADH + H(+). The enzyme catalyses sn-glycerol 3-phosphate + NADP(+) = dihydroxyacetone phosphate + NADPH + H(+). The protein operates within membrane lipid metabolism; glycerophospholipid metabolism. Its function is as follows. Catalyzes the reduction of the glycolytic intermediate dihydroxyacetone phosphate (DHAP) to sn-glycerol 3-phosphate (G3P), the key precursor for phospholipid synthesis. This chain is Glycerol-3-phosphate dehydrogenase [NAD(P)+], found in Streptococcus pyogenes serotype M2 (strain MGAS10270).